Here is a 202-residue protein sequence, read N- to C-terminus: GPI-anchored hemophore cfmB (202 aa).

The N-terminal stretch at 1-18 (MHFSRTSLILFAAGLASA) is a signal peptide. Residues 19–108 (QLPNVPGCSL…STTASETATT (90 aa)) enclose the CFEM domain. 4 disulfide bridges follow: cysteine 26/cysteine 67, cysteine 30/cysteine 62, cysteine 40/cysteine 48, and cysteine 50/cysteine 83. Aspartate 45 provides a ligand contact to heme. The interval 94-171 (PVGAASTTAS…PSSQSTSASA (78 aa)) is disordered. Positions 97–171 (AASTTASETA…PSSQSTSASA (75 aa)) are enriched in low complexity. The GPI-anchor amidated asparagine moiety is linked to residue asparagine 180. Residues 181–202 (AGSEKANVAGVVAVAAAALYLL) constitute a propeptide, removed in mature form.

It belongs to the RBT5 family. The GPI-anchor is attached to the protein in the endoplasmic reticulum and serves to target the protein to the cell surface. There, the glucosamine-inositol phospholipid moiety is cleaved off and the GPI-modified mannoprotein is covalently attached via its lipidless GPI glycan remnant to the 1,6-beta-glucan of the outer cell wall layer.

It is found in the secreted. It localises to the cell wall. The protein localises to the cell membrane. GPI-anchored cell wall protein involved in stabilizing the cell wall. Not implicated in virulence, heme uptake and biofilm formation. The protein is GPI-anchored hemophore cfmB of Aspergillus fumigatus (strain ATCC MYA-4609 / CBS 101355 / FGSC A1100 / Af293) (Neosartorya fumigata).